A 531-amino-acid polypeptide reads, in one-letter code: MADILLLDNIDSFTYNLADQLRSNGHNVVIYRNHIPAQTLIERLATMSNPVLMLSPGPGVPSEAGCMPELLTRLRGKLPIIGICLGHQAIVEAYGGYVGQAGEILHGKASSIEHDGQAMFAGLTNPLPVARYHSLVGSNIPAGLTINAHFNGMVMAVRHDADRVCGFQFHPESILTTQGARLLEQTLAWAQQKLEPANTLQPILEKLYQAQTLSQQESHQLFSAVVRGELKPEQLAAALVSMKIRGEHPNEIAGAATALLENAAPFPRPDYLFADIVGTGGDGSNSINISTASAFVAAACGLKVAKHGNRSVSSKSGSSDLLAAFGINLDMNADKSRQALDELGVCFLFAPKYHTGFRHAMPVRQQLKTRTLFNVLGPLINPAHPPLALIGVYSPELVLPIAETLRVLGYQRAAVVHSGGMDEVSLHAPTIVAELHDGEIKSYQLTAEDFGLTPYHQEQLAGGTPEENRDILTRLLQGKGDAAHEAAVAANVAMLMRLHGHEDLQANAQTVLEVLRSGSAYDRVTALAARG.

The Glutamine amidotransferase type-1 domain maps to 3–196; it reads DILLLDNIDS…LAWAQQKLEP (194 aa). 57–59 contributes to the L-glutamine binding site; sequence GPG. The Nucleophile; for GATase activity role is filled by C84. L-glutamine contacts are provided by residues Q88 and 134 to 135; that span reads SL. Catalysis depends on for GATase activity residues H170 and E172. Residues 202 to 531 form an anthranilate phosphoribosyltransferase region; sequence PILEKLYQAQ…DRVTALAARG (330 aa).

This sequence in the C-terminal section; belongs to the anthranilate phosphoribosyltransferase family. As to quaternary structure, heterotetramer consisting of two non-identical subunits: a beta subunit (TrpG) and a large alpha subunit (TrpE).

The catalysed reaction is chorismate + L-glutamine = anthranilate + pyruvate + L-glutamate + H(+). It catalyses the reaction N-(5-phospho-beta-D-ribosyl)anthranilate + diphosphate = 5-phospho-alpha-D-ribose 1-diphosphate + anthranilate. The protein operates within amino-acid biosynthesis; L-tryptophan biosynthesis; L-tryptophan from chorismate: step 1/5. Its pathway is amino-acid biosynthesis; L-tryptophan biosynthesis; L-tryptophan from chorismate: step 2/5. With respect to regulation, cooperatively feedback inhibited by tryptophan. In terms of biological role, part of a heterotetrameric complex that catalyzes the two-step biosynthesis of anthranilate, an intermediate in the biosynthesis of L-tryptophan. In the first step, the glutamine-binding beta subunit (TrpG) of anthranilate synthase (AS) provides the glutamine amidotransferase activity which generates ammonia as a substrate that, along with chorismate, is used in the second step, catalyzed by the large alpha subunit of AS (TrpE) to produce anthranilate. In the absence of TrpG, TrpE can synthesize anthranilate directly from chorismate and high concentrations of ammonia. In addition to synthesizing anthranilate, it also catalyzes the second step of the pathway, the transfer of the phosphoribosyl group of 5-phosphorylribose-1-pyrophosphate (PRPP) to anthranilate. The protein is Bifunctional protein TrpGD (trpGD) of Escherichia coli (strain K12).